Here is a 278-residue protein sequence, read N- to C-terminus: Digeranylgeranylglyceryl phosphate synthase (278 aa).

Helical transmembrane passes span L12–F32, L34–G54, L91–V111, I129–A149, I153–I173, F204–I224, Y225–V245, and S257–F277.

It belongs to the UbiA prenyltransferase family. DGGGP synthase subfamily. The cofactor is Mg(2+).

The protein resides in the cell membrane. It carries out the reaction sn-3-O-(geranylgeranyl)glycerol 1-phosphate + (2E,6E,10E)-geranylgeranyl diphosphate = 2,3-bis-O-(geranylgeranyl)-sn-glycerol 1-phosphate + diphosphate. Its pathway is membrane lipid metabolism; glycerophospholipid metabolism. In terms of biological role, prenyltransferase that catalyzes the transfer of the geranylgeranyl moiety of geranylgeranyl diphosphate (GGPP) to the C2 hydroxyl of (S)-3-O-geranylgeranylglyceryl phosphate (GGGP). This reaction is the second ether-bond-formation step in the biosynthesis of archaeal membrane lipids. The protein is Digeranylgeranylglyceryl phosphate synthase of Methanococcus maripaludis (strain C7 / ATCC BAA-1331).